A 407-amino-acid polypeptide reads, in one-letter code: Protein trichome birefringence-like 12 (407 aa).

The helical; Signal-anchor for type II membrane protein transmembrane segment at 21-41 threads the bilayer; the sequence is SLLPRILLLSLLLLLFYSLIL. The GDS motif signature appears at 130-132; the sequence is GDS. The DCXHWCLPGXXDXWN motif motif lies at 379 to 393; that stretch reads DCMHWCLPGVPDTWV.

This sequence belongs to the PC-esterase family. TBL subfamily.

The protein localises to the membrane. Functionally, may act as a bridging protein that binds pectin and other cell wall polysaccharides. Probably involved in maintaining esterification of pectins. May be involved in the specific O-acetylation of cell wall polymers. This is Protein trichome birefringence-like 12 (TBL12) from Arabidopsis thaliana (Mouse-ear cress).